A 283-amino-acid chain; its full sequence is Formamidopyrimidine-DNA glycosylase (283 aa).

Residue Pro-2 is the Schiff-base intermediate with DNA of the active site. Glu-3 serves as the catalytic Proton donor. Lys-58 serves as the catalytic Proton donor; for beta-elimination activity. DNA is bound by residues His-100, Arg-119, and Arg-162. An FPG-type zinc finger spans residues 247–283; it reads RVYGREGLPCVTPGCSGTVGRIVQSGRSSFHCPLCQR. The active-site Proton donor; for delta-elimination activity is the Arg-273.

The protein belongs to the FPG family. In terms of assembly, monomer. Zn(2+) serves as cofactor.

It catalyses the reaction Hydrolysis of DNA containing ring-opened 7-methylguanine residues, releasing 2,6-diamino-4-hydroxy-5-(N-methyl)formamidopyrimidine.. It carries out the reaction 2'-deoxyribonucleotide-(2'-deoxyribose 5'-phosphate)-2'-deoxyribonucleotide-DNA = a 3'-end 2'-deoxyribonucleotide-(2,3-dehydro-2,3-deoxyribose 5'-phosphate)-DNA + a 5'-end 5'-phospho-2'-deoxyribonucleoside-DNA + H(+). Involved in base excision repair of DNA damaged by oxidation or by mutagenic agents. Acts as a DNA glycosylase that recognizes and removes damaged bases. Has a preference for oxidized purines, such as 7,8-dihydro-8-oxoguanine (8-oxoG). Has AP (apurinic/apyrimidinic) lyase activity and introduces nicks in the DNA strand. Cleaves the DNA backbone by beta-delta elimination to generate a single-strand break at the site of the removed base with both 3'- and 5'-phosphates. This chain is Formamidopyrimidine-DNA glycosylase, found in Cereibacter sphaeroides (strain KD131 / KCTC 12085) (Rhodobacter sphaeroides).